Consider the following 81-residue polypeptide: Conotoxin Vc6.7 (81 aa).

The signal sequence occupies residues 1–19 (MEKLTILLLVAAVLMSIQA). Positions 20-44 (VNQEKHQRAKMNLLSKRKPPAERWW) are excised as a propeptide. Intrachain disulfides connect Cys49–Cys63, Cys56–Cys67, and Cys62–Cys72.

This sequence belongs to the conotoxin O2 superfamily. As to expression, expressed by the venom duct.

It localises to the secreted. Inhibits voltage-gated ion channels. This chain is Conotoxin Vc6.7, found in Conus victoriae (Queen Victoria cone).